The primary structure comprises 262 residues: Phosphonates import ATP-binding protein PhnC (262 aa).

The ABC transporter domain maps to I5–N253. G37–S44 is an ATP binding site.

The protein belongs to the ABC transporter superfamily. Phosphonates importer (TC 3.A.1.9.1) family. In terms of assembly, the complex is composed of two ATP-binding proteins (PhnC), two transmembrane proteins (PhnE) and a solute-binding protein (PhnD).

Its subcellular location is the cell inner membrane. The enzyme catalyses phosphonate(out) + ATP + H2O = phosphonate(in) + ADP + phosphate + H(+). In terms of biological role, part of the ABC transporter complex PhnCDE involved in phosphonates import. Responsible for energy coupling to the transport system. The polypeptide is Phosphonates import ATP-binding protein PhnC (Escherichia coli O6:K15:H31 (strain 536 / UPEC)).